The primary structure comprises 275 residues: Elongation factor Ts (275 aa).

An involved in Mg(2+) ion dislocation from EF-Tu region spans residues Thr-76–Val-79.

The protein belongs to the EF-Ts family.

The protein resides in the cytoplasm. Functionally, associates with the EF-Tu.GDP complex and induces the exchange of GDP to GTP. It remains bound to the aminoacyl-tRNA.EF-Tu.GTP complex up to the GTP hydrolysis stage on the ribosome. The protein is Elongation factor Ts of Nocardia farcinica (strain IFM 10152).